Reading from the N-terminus, the 317-residue chain is MKVLWAALLVTFLAGCQAKVEQPVEPETEPELRQQAEGQSGQPWELALGRFWDYLRWVQTLSEQVQEELLSPQVTQELTTLMDETMKELKAYKSELEEQLSPVAEETRARLSKELQAAQARLGADMEDVRSRLVQYRSEVQAMLGQSTEELRARLASHLRKLRKRLLRDADDLQKRLAVYQAGAREGAERGVSAIRERLGPLVEQGRVRAATVGSLASQPLQERAQALGERLRARMEEMGSRTRDRLDEVKEQVAEVRAKLEEQAQQISLQAEAFQARLKSWFEPLVEDMQRQWAGLVEKVQAAVGASTAPVPIDNH.

An N-terminal signal peptide occupies residues 1 to 18 (MKVLWAALLVTFLAGCQA). 8 consecutive repeat copies span residues 80–101 (TLMD…EQLS), 102–123 (PVAE…ARLG), 124–145 (ADME…AMLG), 146–167 (QSTE…KRLL), 168–189 (RDAD…EGAE), 190–211 (RGVS…VRAA), 212–233 (TVGS…ERLR), and 234–255 (ARME…EQVA). Residues 80–255 (TLMDETMKEL…RLDEVKEQVA (176 aa)) are 8 X 22 AA approximate tandem repeats. M143 carries the post-translational modification Methionine sulfoxide. At S147 the chain carries Phosphoserine. The LDL and other lipoprotein receptors binding stretch occupies residues 158 to 168 (HLRKLRKRLLR). 162 to 165 (LRKR) lines the heparin pocket. Residues 210–290 (AATVGSLASQ…SWFEPLVEDM (81 aa)) form a lipid-binding and lipoprotein association region. Position 229-236 (229-236 (GERLRARM)) interacts with heparin. The interval 266-317 (QQISLQAEAFQARLKSWFEPLVEDMQRQWAGLVEKVQAAVGASTAPVPIDNH) is homooligomerization. The segment at 278-290 (RLKSWFEPLVEDM) is specificity for association with VLDL.

This sequence belongs to the apolipoprotein A1/A4/E family. As to quaternary structure, homotetramer. May interact with ABCA1; functionally associated with ABCA1 in the biogenesis of HDLs. May interact with APP/A4 amyloid-beta peptide; the interaction is extremely stable in vitro but its physiological significance is unclear. May interact with MAPT. May interact with MAP2. In the cerebrospinal fluid, interacts with secreted SORL1. Interacts with PMEL; this allows the loading of PMEL luminal fragment on ILVs to induce fibril nucleation. APOE exists as multiple glycosylated and sialylated glycoforms within cells and in plasma. The extent of glycosylation and sialylation are tissue and context specific. Post-translationally, glycated in plasma VLDL. In terms of processing, phosphorylated by FAM20C in the extracellular medium.

The protein resides in the secreted. The protein localises to the extracellular space. It localises to the extracellular matrix. It is found in the extracellular vesicle. Its subcellular location is the endosome. The protein resides in the multivesicular body. APOE is an apolipoprotein, a protein associating with lipid particles, that mainly functions in lipoprotein-mediated lipid transport between organs via the plasma and interstitial fluids. APOE is a core component of plasma lipoproteins and is involved in their production, conversion and clearance. Apolipoproteins are amphipathic molecules that interact both with lipids of the lipoprotein particle core and the aqueous environment of the plasma. As such, APOE associates with chylomicrons, chylomicron remnants, very low density lipoproteins (VLDL) and intermediate density lipoproteins (IDL) but shows a preferential binding to high-density lipoproteins (HDL). It also binds a wide range of cellular receptors including the LDL receptor/LDLR, the LDL receptor-related proteins LRP1, LRP2 and LRP8 and the very low-density lipoprotein receptor/VLDLR that mediate the cellular uptake of the APOE-containing lipoprotein particles. Finally, APOE also has a heparin-binding activity and binds heparan-sulfate proteoglycans on the surface of cells, a property that supports the capture and the receptor-mediated uptake of APOE-containing lipoproteins by cells. A main function of APOE is to mediate lipoprotein clearance through the uptake of chylomicrons, VLDLs, and HDLs by hepatocytes. APOE is also involved in the biosynthesis by the liver of VLDLs as well as their uptake by peripheral tissues ensuring the delivery of triglycerides and energy storage in muscle, heart and adipose tissues. By participating in the lipoprotein-mediated distribution of lipids among tissues, APOE plays a critical role in plasma and tissues lipid homeostasis. APOE is also involved in two steps of reverse cholesterol transport, the HDLs-mediated transport of cholesterol from peripheral tissues to the liver, and thereby plays an important role in cholesterol homeostasis. First, it is functionally associated with ABCA1 in the biogenesis of HDLs in tissues. Second, it is enriched in circulating HDLs and mediates their uptake by hepatocytes. APOE also plays an important role in lipid transport in the central nervous system, regulating neuron survival and sprouting. The sequence is that of Apolipoprotein E (APOE) from Macaca fascicularis (Crab-eating macaque).